Here is a 1092-residue protein sequence, read N- to C-terminus: Probable cellulose synthase A catalytic subunit 5 [UDP-forming] (1092 aa).

At 1–279 the chain is on the cytoplasmic side; sequence MEASAGLVAG…SSSLVNPYRM (279 aa). The Zn(2+) site is built by cysteine 39, cysteine 42, cysteine 58, cysteine 61, cysteine 66, cysteine 69, cysteine 81, and cysteine 84. The segment at 39-85 adopts an RING-type; degenerate zinc-finger fold; it reads CQICGDDVGLTPDGEPFVACNECAFPVCRDCYEYERREGTQNCPQCK. The helical transmembrane segment at 280-300 threads the bilayer; it reads IIIIRLVVLGFFFHYRVMHPV. Over 301 to 302 the chain is Extracellular; sequence PD. Residues 303–323 form a helical membrane-spanning segment; the sequence is AFALWLISVICEIWFAMSWIL. Over 324 to 868 the chain is Cytoplasmic; that stretch reads DQFPKWFPIE…CLERFSYINS (545 aa). UDP-alpha-D-glucose is bound by residues serine 362, lysine 368, glutamate 369, and aspartate 398. Aspartate 398 is an active-site residue. Residues 450-479 adopt a coiled-coil conformation; the sequence is NFVRERRAMKREYEEFKVRINALVAKAQKV. Lysine 539 is a UDP-alpha-D-glucose binding site. Residues lysine 540 and aspartate 564 each coordinate Mn(2+). Aspartate 792 is a catalytic residue. A helical transmembrane segment spans residues 869–889; it reads IVYPWTSIPLLAYCTLPAICL. Over 890 to 901 the chain is Extracellular; sequence LTGKFITPELTN. The helical transmembrane segment at 902-922 threads the bilayer; sequence IASLWFMSLFICIFATGILEM. Over 923 to 938 the chain is Cytoplasmic; it reads RWSGVGIDDWWRNEQF. A helical membrane pass occupies residues 939–959; sequence WVIGGVSSHLFAVFQGLLKVI. The Extracellular segment spans residues 960–987; sequence AGIDTSFTVTSKGGDDEEFSELYTFKWT. A helical transmembrane segment spans residues 988–1008; that stretch reads TLLIPPTTLLLLNFIGVVAGV. The Cytoplasmic segment spans residues 1009–1019; that stretch reads SNAINNGYESW. The chain crosses the membrane as a helical span at residues 1020 to 1040; sequence GPLFGKLFFAFWVIVHLYPFL. The Extracellular portion of the chain corresponds to 1041 to 1049; the sequence is KGLVGRQNR. A helical membrane pass occupies residues 1050 to 1070; sequence TPTIVIVWSILLASIFSLLWV. Residues 1071–1092 are Cytoplasmic-facing; sequence RIDPFLAKNDGPLLEECGLDCN.

Belongs to the glycosyltransferase 2 family. Plant cellulose synthase subfamily. Requires Mn(2+) as cofactor. It depends on Zn(2+) as a cofactor.

The protein resides in the cell membrane. The enzyme catalyses [(1-&gt;4)-beta-D-glucosyl](n) + UDP-alpha-D-glucose = [(1-&gt;4)-beta-D-glucosyl](n+1) + UDP + H(+). Its pathway is glycan metabolism; plant cellulose biosynthesis. Functionally, probable catalytic subunit of cellulose synthase terminal complexes ('rosettes'), required for beta-1,4-glucan microfibril crystallization, a major mechanism of the cell wall formation. This is Probable cellulose synthase A catalytic subunit 5 [UDP-forming] (CESA5) from Oryza sativa subsp. indica (Rice).